The primary structure comprises 288 residues: Nucleotide-binding protein APP7_0339 (288 aa).

Position 8–15 (Gly-8–Ser-15) interacts with ATP. Asp-56–Asn-59 lines the GTP pocket.

The protein belongs to the RapZ-like family.

Displays ATPase and GTPase activities. This is Nucleotide-binding protein APP7_0339 from Actinobacillus pleuropneumoniae serotype 7 (strain AP76).